The sequence spans 98 residues: Integration host factor subunit alpha (98 aa).

The protein belongs to the bacterial histone-like protein family. Heterodimer of an alpha and a beta chain.

Functionally, this protein is one of the two subunits of integration host factor, a specific DNA-binding protein that functions in genetic recombination as well as in transcriptional and translational control. In Idiomarina loihiensis (strain ATCC BAA-735 / DSM 15497 / L2-TR), this protein is Integration host factor subunit alpha.